Consider the following 111-residue polypeptide: Dynein light chain Tctex-type (111 aa).

Belongs to the dynein light chain Tctex-type family. The cytoplasmic dynein complex consists of two catalytic heavy chains (HCs) and a number of non-catalytic subunits presented by intermediate chains (ICs), light intermediate chains (LICs) and light chains (LCs).

The protein resides in the cytoplasm. It localises to the cytoskeleton. Acts as one of several non-catalytic accessory components of the cytoplasmic dynein complex that are thought to be involved in linking dynein to cargos and to adapter proteins that regulate dynein function. Cytoplasmic dynein acts as a motor for the intracellular retrograde motility of vesicles and organelles along microtubules. Required for spermatid differentiation. Is not required for polarized transport in rhabdomere development and appears to be a non-essential component of the cytoplasmic dynein complex. This is Dynein light chain Tctex-type (Dlc90F) from Drosophila melanogaster (Fruit fly).